The sequence spans 37 residues: Large ribosomal subunit protein bL36 (37 aa).

It belongs to the bacterial ribosomal protein bL36 family.

The polypeptide is Large ribosomal subunit protein bL36 (Maridesulfovibrio salexigens (strain ATCC 14822 / DSM 2638 / NCIMB 8403 / VKM B-1763) (Desulfovibrio salexigens)).